The primary structure comprises 344 residues: Lipase chaperone (344 aa).

The chain crosses the membrane as a helical span at residues 14 to 34 (AVVYGVVGLAAIAGVAMWSGA).

The protein belongs to the lipase chaperone family.

The protein localises to the cell inner membrane. May be involved in the folding of the extracellular lipase during its passage through the periplasm. In Burkholderia cepacia (Pseudomonas cepacia), this protein is Lipase chaperone (lifO).